The primary structure comprises 38 residues: Large ribosomal subunit protein bL36 (38 aa).

This sequence belongs to the bacterial ribosomal protein bL36 family.

The protein is Large ribosomal subunit protein bL36 of Lacticaseibacillus casei (strain BL23) (Lactobacillus casei).